Here is a 369-residue protein sequence, read N- to C-terminus: Allantoicase (369 aa).

The disordered stretch occupies residues 341 to 369 (PDSKNNNNNNNNNNNNNTSNSFKTSDRQQ). Over residues 345–357 (NNNNNNNNNNNNN) the composition is skewed to low complexity.

It belongs to the allantoicase family.

The catalysed reaction is allantoate + H2O = (S)-ureidoglycolate + urea. Its pathway is nitrogen metabolism; (S)-allantoin degradation; (S)-ureidoglycolate from allantoate (aminidohydrolase route): step 1/1. Utilization of purines as secondary nitrogen sources, when primary sources are limiting. This Dictyostelium discoideum (Social amoeba) protein is Allantoicase (allC).